The chain runs to 150 residues: Large ribosomal subunit protein uL11 (150 aa).

Belongs to the universal ribosomal protein uL11 family. Part of the ribosomal stalk of the 50S ribosomal subunit. Interacts with L10 and the large rRNA to form the base of the stalk. L10 forms an elongated spine to which L12 dimers bind in a sequential fashion forming a multimeric L10(L12)X complex. Post-translationally, one or more lysine residues are methylated.

Functionally, forms part of the ribosomal stalk which helps the ribosome interact with GTP-bound translation factors. This is Large ribosomal subunit protein uL11 from Cereibacter sphaeroides (strain ATCC 17025 / ATH 2.4.3) (Rhodobacter sphaeroides).